A 336-amino-acid chain; its full sequence is Glyoxylate reductase (336 aa).

NADP(+) contacts are provided by residues 158–161, 180–182, and 239–241; these read FGRI, SRT, and IAR. Active-site residues include R241 and E270. Catalysis depends on H288, which acts as the Proton donor. 288 to 290 serves as a coordination point for NADP(+); the sequence is HIG.

Belongs to the D-isomer specific 2-hydroxyacid dehydrogenase family. GyaR subfamily. As to quaternary structure, homodimer.

It localises to the cytoplasm. The catalysed reaction is glycolate + NAD(+) = glyoxylate + NADH + H(+). This Pyrococcus furiosus (strain ATCC 43587 / DSM 3638 / JCM 8422 / Vc1) protein is Glyoxylate reductase.